Here is a 173-residue protein sequence, read N- to C-terminus: Chorion class B protein Ld32 (173 aa).

Residues 1 to 7 (FVQSALS) form the signal peptide.

The protein belongs to the chorion protein family.

In terms of biological role, this protein is one of many from the eggshell of the gypsy moth. The sequence is that of Chorion class B protein Ld32 from Lymantria dispar (Gypsy moth).